A 189-amino-acid polypeptide reads, in one-letter code: Interferon alpha-1/13 (189 aa).

Residues 1–23 (MASPFALLMVLVVLSCKSSCSLG) form the signal peptide. 2 cysteine pairs are disulfide-bonded: Cys24-Cys122 and Cys52-Cys162.

This sequence belongs to the alpha/beta interferon family. In terms of assembly, interacts with CR2.

The protein resides in the secreted. Produced by macrophages, IFN-alpha have antiviral activities. Interferon stimulates the production of two enzymes: a protein kinase and an oligoadenylate synthetase. This is Interferon alpha-1/13 (IFNA1) from Homo sapiens (Human).